A 568-amino-acid chain; its full sequence is CRISPR-associated exonuclease Cas4/endonuclease Cas1 fusion (568 aa).

The CRISPR-associated exonuclease Cas4 stretch occupies residues 1 to 209 (MSVVVTRYRG…KCSLAPVCLP (209 aa)). C43 contributes to the [4Fe-4S] cluster binding site. Residues D95 and E108 each coordinate Mn(2+). [4Fe-4S] cluster is bound by residues C198, C201, and C207. The CRISPR-associated endonuclease Cas1 stretch occupies residues 232 to 568 (VLHVATPGTR…PGLFATFRLR (337 aa)). Mn(2+)-binding residues include E390, H459, and E474.

It in the N-terminal section; belongs to the CRISPR-associated exonuclease Cas4 family. This sequence in the C-terminal section; belongs to the CRISPR-associated endonuclease Cas1 family. Homodimer, forms a heterotetramer with a Cas2 homodimer. Requires [4Fe-4S] cluster as cofactor. It depends on Mg(2+) as a cofactor. Mn(2+) is required as a cofactor.

The enzyme catalyses exonucleolytic cleavage in the 5'- to 3'-direction to yield nucleoside 3'-phosphates.. CRISPR (clustered regularly interspaced short palindromic repeat), is an adaptive immune system that provides protection against mobile genetic elements (viruses, transposable elements and conjugative plasmids). CRISPR clusters contain spacers, sequences complementary to antecedent mobile elements, and target invading nucleic acids. CRISPR clusters are transcribed and processed into CRISPR RNA (crRNA). The Cas4 region acts as a ssDNA exonuclease, while the Cas1 region acts as a dsDNA endonuclease. Involved in the integration of spacer DNA into the CRISPR cassette. This Myxococcus xanthus (strain DK1622) protein is CRISPR-associated exonuclease Cas4/endonuclease Cas1 fusion (cas4-cas1).